Reading from the N-terminus, the 481-residue chain is Proline--tRNA ligase (481 aa).

It belongs to the class-II aminoacyl-tRNA synthetase family. ProS type 3 subfamily. As to quaternary structure, homodimer.

It is found in the cytoplasm. It carries out the reaction tRNA(Pro) + L-proline + ATP = L-prolyl-tRNA(Pro) + AMP + diphosphate. Catalyzes the attachment of proline to tRNA(Pro) in a two-step reaction: proline is first activated by ATP to form Pro-AMP and then transferred to the acceptor end of tRNA(Pro). The polypeptide is Proline--tRNA ligase (Chlorobaculum tepidum (strain ATCC 49652 / DSM 12025 / NBRC 103806 / TLS) (Chlorobium tepidum)).